Here is a 258-residue protein sequence, read N- to C-terminus: Phosphate import ATP-binding protein PstB (258 aa).

The ABC transporter domain maps to 12–253 (LEVKNLNFYY…PARKETEDYI (242 aa)). 44–51 (GPSGCGKS) contacts ATP.

It belongs to the ABC transporter superfamily. Phosphate importer (TC 3.A.1.7) family. As to quaternary structure, the complex is composed of two ATP-binding proteins (PstB), two transmembrane proteins (PstC and PstA) and a solute-binding protein (PstS).

The protein resides in the cell inner membrane. It carries out the reaction phosphate(out) + ATP + H2O = ADP + 2 phosphate(in) + H(+). Functionally, part of the ABC transporter complex PstSACB involved in phosphate import. Responsible for energy coupling to the transport system. The chain is Phosphate import ATP-binding protein PstB from Bordetella pertussis (strain Tohama I / ATCC BAA-589 / NCTC 13251).